The chain runs to 166 residues: ATP synthase subunit b (166 aa).

Residues 8-28 (FSFGLFFWQALILVILILLLV) form a helical membrane-spanning segment.

The protein belongs to the ATPase B chain family. As to quaternary structure, F-type ATPases have 2 components, F(1) - the catalytic core - and F(0) - the membrane proton channel. F(1) has five subunits: alpha(3), beta(3), gamma(1), delta(1), epsilon(1). F(0) has three main subunits: a(1), b(2) and c(10-14). The alpha and beta chains form an alternating ring which encloses part of the gamma chain. F(1) is attached to F(0) by a central stalk formed by the gamma and epsilon chains, while a peripheral stalk is formed by the delta and b chains.

Its subcellular location is the cell inner membrane. Functionally, f(1)F(0) ATP synthase produces ATP from ADP in the presence of a proton or sodium gradient. F-type ATPases consist of two structural domains, F(1) containing the extramembraneous catalytic core and F(0) containing the membrane proton channel, linked together by a central stalk and a peripheral stalk. During catalysis, ATP synthesis in the catalytic domain of F(1) is coupled via a rotary mechanism of the central stalk subunits to proton translocation. Component of the F(0) channel, it forms part of the peripheral stalk, linking F(1) to F(0). This chain is ATP synthase subunit b, found in Flavobacterium johnsoniae (strain ATCC 17061 / DSM 2064 / JCM 8514 / BCRC 14874 / CCUG 350202 / NBRC 14942 / NCIMB 11054 / UW101) (Cytophaga johnsonae).